A 375-amino-acid chain; its full sequence is Tyrosine--tRNA ligase (375 aa).

5 residues coordinate L-tyrosine: tyrosine 37, tyrosine 168, glutamine 172, aspartate 175, and glutamine 190. The 'KMSKS' region signature appears at 251–255 (KMSKS). Lysine 254 lines the ATP pocket.

This sequence belongs to the class-I aminoacyl-tRNA synthetase family. TyrS type 4 subfamily. As to quaternary structure, homodimer.

Its subcellular location is the cytoplasm. The catalysed reaction is tRNA(Tyr) + L-tyrosine + ATP = L-tyrosyl-tRNA(Tyr) + AMP + diphosphate + H(+). Its function is as follows. Catalyzes the attachment of tyrosine to tRNA(Tyr) in a two-step reaction: tyrosine is first activated by ATP to form Tyr-AMP and then transferred to the acceptor end of tRNA(Tyr). The protein is Tyrosine--tRNA ligase of Pyrococcus furiosus (strain ATCC 43587 / DSM 3638 / JCM 8422 / Vc1).